A 372-amino-acid chain; its full sequence is Transaldolase (372 aa).

K140 (schiff-base intermediate with substrate) is an active-site residue.

The protein belongs to the transaldolase family. Type 2 subfamily.

It is found in the cytoplasm. It catalyses the reaction D-sedoheptulose 7-phosphate + D-glyceraldehyde 3-phosphate = D-erythrose 4-phosphate + beta-D-fructose 6-phosphate. It functions in the pathway carbohydrate degradation; pentose phosphate pathway; D-glyceraldehyde 3-phosphate and beta-D-fructose 6-phosphate from D-ribose 5-phosphate and D-xylulose 5-phosphate (non-oxidative stage): step 2/3. Its function is as follows. Transaldolase is important for the balance of metabolites in the pentose-phosphate pathway. The chain is Transaldolase from Acidothermus cellulolyticus (strain ATCC 43068 / DSM 8971 / 11B).